A 524-amino-acid chain; its full sequence is Nif-specific regulatory protein (524 aa).

The tract at residues 1–182 (MIHKSDSDTT…AQTIRLMILP (182 aa)) is a domain. Positions 35–176 (EASKTLQEVL…TVANLIAQTI (142 aa)) constitute a GAF domain. In terms of domain architecture, Sigma-54 factor interaction spans 212 to 481 (MVGKSPAMRQ…DGWLDNSLDE (270 aa)). ATP-binding positions include 240-247 (GESGTGKE) and 303-312 (ADGGTLFLDE). A C-terminal DNA-binding domain region spans residues 482 to 524 (RQRLIAALEKAGWVQAKAARLLGMTPRQVAYRIQIMDITMPRL). The H-T-H motif DNA-binding region spans 496 to 515 (QAKAARLLGMTPRQVAYRIQ).

Interacts with sigma-54.

Its function is as follows. Required for activation of most nif operons, which are directly involved in nitrogen fixation. In Klebsiella oxytoca, this protein is Nif-specific regulatory protein (nifA).